Reading from the N-terminus, the 339-residue chain is UPF0450 protein C17orf58 (339 aa).

An N-terminal signal peptide occupies residues 1–17 (MTARAFWLLCLIVGSSP). The tract at residues 17-191 (PEAPVAERKT…PQRDAEPGAE (175 aa)) is disordered. Positions 21 to 36 (VAERKTSPPHSRKPDS) are enriched in basic and acidic residues. Positions 56-72 (APQRPRAAEVAPAARAW) are enriched in low complexity. A compositionally biased stretch (basic and acidic residues) spans 112–125 (ASPRREPASEDAPR). A compositionally biased stretch (low complexity) spans 132-163 (LRFPAARPPALATEGSAGHAHPNRPRAAALAP). Disulfide bonds link Cys193–Cys267, Cys197–Cys271, and Cys208–Cys338. Positions 193-338 (CARACRSDLD…QIQGAIHTQC (146 aa)) constitute an NTR domain.

It belongs to the UPF0450 family.

This chain is UPF0450 protein C17orf58 (C17orf58), found in Homo sapiens (Human).